A 278-amino-acid chain; its full sequence is S-formylglutathione hydrolase YeiG (278 aa).

Residues Ser-145, Asp-223, and His-256 each act as charge relay system in the active site.

It belongs to the esterase D family.

It catalyses the reaction S-formylglutathione + H2O = formate + glutathione + H(+). Its function is as follows. Serine hydrolase involved in the detoxification of formaldehyde. Hydrolyzes S-formylglutathione to glutathione and formate. The polypeptide is S-formylglutathione hydrolase YeiG (yeiG) (Escherichia coli (strain SMS-3-5 / SECEC)).